A 370-amino-acid polypeptide reads, in one-letter code: Histidinol-phosphate aminotransferase 3 (370 aa).

An N6-(pyridoxal phosphate)lysine modification is found at Lys229.

It belongs to the class-II pyridoxal-phosphate-dependent aminotransferase family. Histidinol-phosphate aminotransferase subfamily. In terms of assembly, homodimer. It depends on pyridoxal 5'-phosphate as a cofactor.

It catalyses the reaction L-histidinol phosphate + 2-oxoglutarate = 3-(imidazol-4-yl)-2-oxopropyl phosphate + L-glutamate. It participates in amino-acid biosynthesis; L-histidine biosynthesis; L-histidine from 5-phospho-alpha-D-ribose 1-diphosphate: step 7/9. This is Histidinol-phosphate aminotransferase 3 (hisC3) from Rhizobium meliloti (strain 1021) (Ensifer meliloti).